A 214-amino-acid chain; its full sequence is Holliday junction branch migration complex subunit RuvA (214 aa).

The domain I stretch occupies residues 1–63 (MISFLRGPVA…EDSMTLYGFA (63 aa)). Residues 64–139 (DPDEREVFEI…KLVPHGTVNG (76 aa)) form a domain II region. The flexible linker stretch occupies residues 139-143 (GAPAS). The segment at 144-214 (PSAQWKPQVV…SAGRQVTARG (71 aa)) is domain III.

It belongs to the RuvA family. In terms of assembly, homotetramer. Forms an RuvA(8)-RuvB(12)-Holliday junction (HJ) complex. HJ DNA is sandwiched between 2 RuvA tetramers; dsDNA enters through RuvA and exits via RuvB. An RuvB hexamer assembles on each DNA strand where it exits the tetramer. Each RuvB hexamer is contacted by two RuvA subunits (via domain III) on 2 adjacent RuvB subunits; this complex drives branch migration. In the full resolvosome a probable DNA-RuvA(4)-RuvB(12)-RuvC(2) complex forms which resolves the HJ.

It is found in the cytoplasm. In terms of biological role, the RuvA-RuvB-RuvC complex processes Holliday junction (HJ) DNA during genetic recombination and DNA repair, while the RuvA-RuvB complex plays an important role in the rescue of blocked DNA replication forks via replication fork reversal (RFR). RuvA specifically binds to HJ cruciform DNA, conferring on it an open structure. The RuvB hexamer acts as an ATP-dependent pump, pulling dsDNA into and through the RuvAB complex. HJ branch migration allows RuvC to scan DNA until it finds its consensus sequence, where it cleaves and resolves the cruciform DNA. This chain is Holliday junction branch migration complex subunit RuvA, found in Renibacterium salmoninarum (strain ATCC 33209 / DSM 20767 / JCM 11484 / NBRC 15589 / NCIMB 2235).